The primary structure comprises 358 residues: Stearoyl-CoA desaturase 2 (358 aa).

At 1–71 (MPAHILQEIS…EGPPPKLEYV (71 aa)) the chain is on the cytoplasmic side. A disordered region spans residues 16-39 (TTTITAPPSGGQQNGGEKFEKSSH). Residues 72–92 (WRNIILMALLHLGALYGITLV) form a helical membrane-spanning segment. A substrate-binding site is contributed by N74. Topologically, residues 93–96 (PSCK) are lumenal. A helical membrane pass occupies residues 97-117 (LYTCLFAYLYYVISALGITAG). The Cytoplasmic portion of the chain corresponds to 118-216 (AHRLWSHRTY…EKLVMFQRRY (99 aa)). Residues H119 and H124 each contribute to the Fe cation site. Residues 119–124 (HRLWSH) carry the Histidine box-1 motif. The substrate site is built by N147, R154, and D155. Positions 156, 159, and 160 each coordinate Fe cation. The short motif at 156-160 (HRAHH) is the Histidine box-2 element. The substrate site is built by R187 and K188. A helical transmembrane segment spans residues 217–236 (YKPGLLLMCFVLPTLVPWYC). Over 237 to 240 (WGET) the chain is Lumenal. The chain crosses the membrane as a helical span at residues 241-262 (FVNSLCVSTFLRYAVVLNATWL). Position 261 (W261) interacts with substrate. The Cytoplasmic portion of the chain corresponds to 263-358 (VNSAAHLYGY…RTGDGSCKSG (96 aa)). H268, H297, H300, and H301 together coordinate Fe cation. The short motif at 297 to 301 (HNYHH) is the Histidine box-3 element.

Belongs to the fatty acid desaturase type 1 family. Fe(2+) is required as a cofactor. As to expression, detected in brain and skin. Highly expressed in brain, and detected at low levels in heart, stomach, lung and testis. Detected both in dermis and epidermis.

The protein resides in the endoplasmic reticulum membrane. Its subcellular location is the microsome membrane. The enzyme catalyses octadecanoyl-CoA + 2 Fe(II)-[cytochrome b5] + O2 + 2 H(+) = (9Z)-octadecenoyl-CoA + 2 Fe(III)-[cytochrome b5] + 2 H2O. The catalysed reaction is hexadecanoyl-CoA + 2 Fe(II)-[cytochrome b5] + O2 + 2 H(+) = (9Z)-hexadecenoyl-CoA + 2 Fe(III)-[cytochrome b5] + 2 H2O. In terms of biological role, stearoyl-CoA desaturase that utilizes O(2) and electrons from reduced cytochrome b5 to introduce the first double bond into saturated fatty acyl-CoA substrates. Catalyzes the insertion of a cis double bond at the delta-9 position into fatty acyl-CoA substrates including palmitoyl-CoA and stearoyl-CoA. Gives rise to a mixture of 16:1 and 18:1 unsaturated fatty acids. Contributes to the biosynthesis of membrane phospholipids, cholesterol esters and triglycerides, especially during embryonic development and in neonates. Important for normal permeability barrier function of the skin in neonates. The polypeptide is Stearoyl-CoA desaturase 2 (Scd2) (Mus musculus (Mouse)).